The following is a 105-amino-acid chain: Met repressor (105 aa).

This sequence belongs to the MetJ family. Homodimer.

It is found in the cytoplasm. In terms of biological role, this regulatory protein, when combined with SAM (S-adenosylmethionine) represses the expression of the methionine regulon and of enzymes involved in SAM synthesis. The polypeptide is Met repressor (Haemophilus influenzae (strain 86-028NP)).